Consider the following 394-residue polypeptide: 1-deoxy-D-xylulose 5-phosphate reductoisomerase (394 aa).

Threonine 12, glycine 13, serine 14, isoleucine 15, lysine 39, glutamine 40, and asparagine 126 together coordinate NADPH. Lysine 127 serves as a coordination point for 1-deoxy-D-xylulose 5-phosphate. Glutamate 128 lines the NADPH pocket. Aspartate 152 serves as a coordination point for Mn(2+). 1-deoxy-D-xylulose 5-phosphate-binding residues include serine 153, glutamate 154, serine 183, and histidine 206. Glutamate 154 contacts Mn(2+). NADPH is bound at residue glycine 212. 1-deoxy-D-xylulose 5-phosphate is bound by residues serine 219, asparagine 224, lysine 225, and glutamate 228. Glutamate 228 lines the Mn(2+) pocket.

This sequence belongs to the DXR family. Mg(2+) is required as a cofactor. Mn(2+) serves as cofactor.

It carries out the reaction 2-C-methyl-D-erythritol 4-phosphate + NADP(+) = 1-deoxy-D-xylulose 5-phosphate + NADPH + H(+). It participates in isoprenoid biosynthesis; isopentenyl diphosphate biosynthesis via DXP pathway; isopentenyl diphosphate from 1-deoxy-D-xylulose 5-phosphate: step 1/6. Catalyzes the NADPH-dependent rearrangement and reduction of 1-deoxy-D-xylulose-5-phosphate (DXP) to 2-C-methyl-D-erythritol 4-phosphate (MEP). This Neisseria gonorrhoeae (strain ATCC 700825 / FA 1090) protein is 1-deoxy-D-xylulose 5-phosphate reductoisomerase.